The chain runs to 185 residues: ATP synthase subunit b (185 aa).

The helical transmembrane segment at 28-48 (VVLVGFAVLMYIVVKFVVPMF) threads the bilayer.

The protein belongs to the ATPase B chain family. As to quaternary structure, F-type ATPases have 2 components, F(1) - the catalytic core - and F(0) - the membrane proton channel. F(1) has five subunits: alpha(3), beta(3), gamma(1), delta(1), epsilon(1). F(0) has three main subunits: a(1), b(2) and c(10-14). The alpha and beta chains form an alternating ring which encloses part of the gamma chain. F(1) is attached to F(0) by a central stalk formed by the gamma and epsilon chains, while a peripheral stalk is formed by the delta and b chains.

It is found in the cell membrane. In terms of biological role, f(1)F(0) ATP synthase produces ATP from ADP in the presence of a proton or sodium gradient. F-type ATPases consist of two structural domains, F(1) containing the extramembraneous catalytic core and F(0) containing the membrane proton channel, linked together by a central stalk and a peripheral stalk. During catalysis, ATP synthesis in the catalytic domain of F(1) is coupled via a rotary mechanism of the central stalk subunits to proton translocation. Functionally, component of the F(0) channel, it forms part of the peripheral stalk, linking F(1) to F(0). This chain is ATP synthase subunit b, found in Paenarthrobacter aurescens (strain TC1).